We begin with the raw amino-acid sequence, 380 residues long: All-trans-retinol dehydrogenase [NAD(+)] ADH4 (380 aa).

Position 47 (C47) interacts with Zn(2+). 48 to 49 (HT) is a binding site for NAD(+). Zn(2+) is bound by residues H69, C99, C102, C105, and C113. S121 bears the Phosphoserine mark. C180 serves as a coordination point for Zn(2+). NAD(+) contacts are provided by residues 205-210 (GLGGVG), D229, and K234. S278 carries the phosphoserine modification. NAD(+) is bound by residues 298–300 (IGV), 323–325 (TFF), and R375.

It belongs to the zinc-containing alcohol dehydrogenase family. Class-II subfamily. Homodimer. The cofactor is Zn(2+).

It localises to the cytoplasm. The enzyme catalyses all-trans-retinol + NAD(+) = all-trans-retinal + NADH + H(+). It catalyses the reaction 9-cis-retinol + NAD(+) = 9-cis-retinal + NADH + H(+). The catalysed reaction is 20-oxo-(5Z,8Z,11Z,14Z)-eicosatetraenoate + NAD(+) + H2O = (5Z,8Z,11Z,14Z)-eicosatetraenedioate + NADH + 2 H(+). It carries out the reaction 20-hydroxy-(5Z,8Z,11Z,14Z)-eicosatetraenoate + NAD(+) = 20-oxo-(5Z,8Z,11Z,14Z)-eicosatetraenoate + NADH + H(+). The enzyme catalyses 1,4-benzoquinone + NADH + H(+) = hydroquinone + NAD(+). Its activity is regulated as follows. Oxydation of 20-HETE is inhibited by low concentrations of N-heptylformamide. Oxydation of 20-HETE is a decreased by 55-65% by either all-trans-retinol or all-trans-retinoic acid. Strongly inhibited by omega-hydroxy fatty acids. Its function is as follows. Catalyzes the NAD-dependent oxidation of either all-trans-retinol or 9-cis-retinol. Also oxidizes long chain omega-hydroxy fatty acids, such as 20-HETE, producing both the intermediate aldehyde, 20-oxoarachidonate and the end product, a dicarboxylic acid, (5Z,8Z,11Z,14Z)-eicosatetraenedioate. Also catalyzes the reduction of benzoquinones. The polypeptide is All-trans-retinol dehydrogenase [NAD(+)] ADH4 (Homo sapiens (Human)).